Here is a 594-residue protein sequence, read N- to C-terminus: Type I restriction enzyme EcoEI specificity subunit (594 aa).

The protein belongs to the type-I restriction system S methylase family. In terms of assembly, the type I restriction/modification system is composed of three polypeptides R, M and S; the restriction enzyme has stoichiometry R(2)M(2)S(1) while the methyltransferase is M(2)S(1).

Functionally, the specificity (S) subunit of a type I restriction enzyme; this subunit dictates DNA sequence specificity. The M and S subunits together form a methyltransferase (MTase) that methylates two adenine residues of the sequence 5'-GAGN(7)ATGC-3'. In the presence of the R subunit the complex can also act as an endonuclease, binding to the same target sequence but cutting the DNA some distance from this site. Whether the DNA is cut or modified depends on the methylation state of the target sequence. When the target site is unmodified, the DNA is cut. When the target site is hemimethylated, the complex acts as a maintenance MTase modifying the DNA so that both strands become methylated. After locating a non-methylated recognition site, the enzyme complex serves as a molecular motor that translocates DNA in an ATP-dependent manner until a collision occurs that triggers cleavage. The protein is Type I restriction enzyme EcoEI specificity subunit of Escherichia coli.